Here is a 300-residue protein sequence, read N- to C-terminus: Cation-efflux pump FieF (300 aa).

The chain crosses the membrane as a helical span at residues 24–44 (LLIKIFAWWYTGSVSILAALV). The Zn(2+) site is built by D45 and D49. The next 2 membrane-spanning stretches (helical) occupy residues 82 to 102 (AALAQSMFISGSALFLFLTSI) and 114 to 134 (PGVGIGVTVIALICTIILVTF). Zn(2+) is bound by residues H153 and D157. The next 2 membrane-spanning stretches (helical) occupy residues 156–176 (SDVMMNGAILIALGLSWYGWH) and 178–198 (ADALFALGIGIYILYSALRMG).

The protein belongs to the cation diffusion facilitator (CDF) transporter (TC 2.A.4) family. FieF subfamily. Homodimer.

It is found in the cell inner membrane. The catalysed reaction is Zn(2+)(in) + H(+)(out) = Zn(2+)(out) + H(+)(in). It catalyses the reaction Cd(2+)(in) + H(+)(out) = Cd(2+)(out) + H(+)(in). It carries out the reaction Fe(2+)(in) + H(+)(out) = Fe(2+)(out) + H(+)(in). Divalent metal cation transporter which exports Zn(2+), Cd(2+) and possibly Fe(2+). May be involved in zinc and iron detoxification by efflux. The protein is Cation-efflux pump FieF of Salmonella enteritidis PT4 (strain P125109).